Here is a 137-residue protein sequence, read N- to C-terminus: Putative pre-16S rRNA nuclease (137 aa).

The protein belongs to the YqgF nuclease family.

It localises to the cytoplasm. Could be a nuclease involved in processing of the 5'-end of pre-16S rRNA. The sequence is that of Putative pre-16S rRNA nuclease from Anaeromyxobacter dehalogenans (strain 2CP-1 / ATCC BAA-258).